A 146-amino-acid polypeptide reads, in one-letter code: Type II secretion system core protein G (146 aa).

Positions 1-9 are cleaved as a propeptide — leader sequence; sequence MKKMRKQTG. Phe-10 bears the N-methylphenylalanine mark. Residues 10 to 30 traverse the membrane as a helical segment; it reads FTLLEVMVVVVILGILASFVV.

It belongs to the GSP G family. Type II secretion system is composed of four main components: the outer membrane complex, the inner membrane complex, the cytoplasmic secretion ATPase and the periplasm-spanning pseudopilus. Forms homomultimers. Interacts with EspL. In terms of processing, cleaved by the prepilin peptidase. Post-translationally, methylated by prepilin peptidase at the amino group of the N-terminal phenylalanine once the leader sequence is cleaved.

It is found in the cell inner membrane. In terms of biological role, core component of the type II secretion system required for the energy-dependent secretion of extracellular factors such as proteases and toxins from the periplasm. Pseudopilin (pilin-like) protein that polymerizes to form the pseudopilus. Further polymerization triggers pseudopilus growth. The protein is Type II secretion system core protein G (epsG) of Vibrio cholerae serotype O1 (strain ATCC 39315 / El Tor Inaba N16961).